Here is a 199-residue protein sequence, read N- to C-terminus: MVKVLVLYYSAYGHMEKMAKAAAEGAREGGAEVTIKRVPELVPPDVAKASHYKIDQDAPIATPAELADYDAIIIGTATRYGMMAAQMKNFLDQTGGLWAKGALINKVGSVMVSTATQHGGAELALISTQWQMQHQGMIIVPLSYAYQGQMGNDVVRGGAPYGMTTTADGDGSRQPSEQELDGARFQGKRVAEITAKLNS.

The region spanning 4 to 190 is the Flavodoxin-like domain; sequence VLVLYYSAYG…DGARFQGKRV (187 aa). FMN contacts are provided by residues 10 to 15 and 78 to 80; these read SAYGHM and TRY. NAD(+) is bound at residue Tyr-12. Trp-98 is a binding site for substrate. FMN-binding positions include 113–119 and His-134; that span reads STATQHG. Positions 157-185 are disordered; the sequence is GGAPYGMTTTADGDGSRQPSEQELDGARF. A compositionally biased stretch (polar residues) spans 163–177; the sequence is MTTTADGDGSRQPSE.

Belongs to the WrbA family. FMN serves as cofactor.

It catalyses the reaction a quinone + NADH + H(+) = a quinol + NAD(+). The enzyme catalyses a quinone + NADPH + H(+) = a quinol + NADP(+). The protein is NAD(P)H dehydrogenase (quinone) of Brucella anthropi (strain ATCC 49188 / DSM 6882 / CCUG 24695 / JCM 21032 / LMG 3331 / NBRC 15819 / NCTC 12168 / Alc 37) (Ochrobactrum anthropi).